Here is a 217-residue protein sequence, read N- to C-terminus: Snake venom metalloproteinase lebetase-4 (217 aa).

Residues 1–14 (SCRKKASQLNLTPE) constitute a propeptide that is removed on maturation. At Gln-15 the chain carries Pyrrolidone carboxylic acid. One can recognise a Peptidase M12B domain in the interval 21-217 (RYIELVIVAD…HNPQCILNQP (197 aa)). Ca(2+) is bound by residues Glu-24 and Asp-108. Cystine bridges form between Cys-132-Cys-212, Cys-172-Cys-196, and Cys-174-Cys-179. His-157 provides a ligand contact to Zn(2+). Glu-158 is an active-site residue. His-161 and His-167 together coordinate Zn(2+). 2 residues coordinate Ca(2+): Cys-212 and Asn-215.

This sequence belongs to the venom metalloproteinase (M12B) family. P-I subfamily. Monomer. Requires Zn(2+) as cofactor. In terms of tissue distribution, expressed by the venom gland.

The protein resides in the secreted. Its activity is regulated as follows. Fibrinolytic and caseinolytic activities are inhibited by Cd(2+), Cu(2+) and Co(2+) ions. Not inhibited by Mg(2+), Ca(2+) and Ba(2+). Also inhibited by EDTA, EGTA and 1,10-phenanthroline. Snake venom zinc metalloprotease that hydrolyzes the Aalpha-chain and more slowly the Bbeta-chain of fibrin and fibrinogen. Also hydrolyzes casein and B-chain of oxidized insulin. Its fibrinolytic activity is direct, without any plasminogen activation. Inhibits ADP-induced and collagen-induced platelet aggregation. Shows low hemorrhagic activity. Cleaves the plasma proteinase inhibitors alpha(2)-macroglobulin (A2M) and alpha(2)M-related pregnancy zone protein (PZP), and is inhibited by them. This Macrovipera lebetinus (Levantine viper) protein is Snake venom metalloproteinase lebetase-4.